Here is a 248-residue protein sequence, read N- to C-terminus: tRNA (guanine-N(1)-)-methyltransferase (248 aa).

S-adenosyl-L-methionine is bound by residues Gly113 and 133–138 (IGDFVL).

The protein belongs to the RNA methyltransferase TrmD family. Homodimer.

The protein resides in the cytoplasm. The catalysed reaction is guanosine(37) in tRNA + S-adenosyl-L-methionine = N(1)-methylguanosine(37) in tRNA + S-adenosyl-L-homocysteine + H(+). Functionally, specifically methylates guanosine-37 in various tRNAs. The sequence is that of tRNA (guanine-N(1)-)-methyltransferase from Dehalococcoides mccartyi (strain ATCC BAA-2100 / JCM 16839 / KCTC 5957 / BAV1).